The following is a 254-amino-acid chain: CRISPR-associated endoribonuclease Cas6 1 (254 aa).

Tyr32 functions as the Proton acceptor in the catalytic mechanism. The active-site Proton donor is the His47.

It belongs to the CRISPR-associated protein Cas6/Cse3/CasE family.

In terms of biological role, CRISPR (clustered regularly interspaced short palindromic repeat) is an adaptive immune system that provides protection against mobile genetic elements (viruses, transposable elements and conjugative plasmids). CRISPR clusters contain sequences complementary to antecedent mobile elements and target invading nucleic acids. CRISPR clusters are transcribed and processed into CRISPR RNA (crRNA). This protein processes pre-crRNA into individual crRNA units. The protein is CRISPR-associated endoribonuclease Cas6 1 (cas6a) of Methanocaldococcus jannaschii (strain ATCC 43067 / DSM 2661 / JAL-1 / JCM 10045 / NBRC 100440) (Methanococcus jannaschii).